The sequence spans 396 residues: Flavohemoprotein (396 aa).

In terms of domain architecture, Globin spans 1 to 136 (MLDAQTIATV…LANVFIHREA (136 aa)). His-85 contacts heme b. Catalysis depends on charge relay system residues Tyr-95 and Glu-135. The interval 147–396 (GGWEGTRPFR…YECFGPHKVL (250 aa)) is reductase. The FAD-binding FR-type domain maps to 150 to 255 (EGTRPFRIVA…AAPAGDFFMN (106 aa)). Residues Tyr-188 and 204-207 (RQYS) contribute to the FAD site. 268–273 (GVGQTP) is a binding site for NADP(+). 389-392 (CFGP) is an FAD binding site.

Belongs to the globin family. Two-domain flavohemoproteins subfamily. It in the C-terminal section; belongs to the flavoprotein pyridine nucleotide cytochrome reductase family. The cofactor is heme b. FAD is required as a cofactor.

The catalysed reaction is 2 nitric oxide + NADPH + 2 O2 = 2 nitrate + NADP(+) + H(+). It carries out the reaction 2 nitric oxide + NADH + 2 O2 = 2 nitrate + NAD(+) + H(+). Its function is as follows. Is involved in NO detoxification in an aerobic process, termed nitric oxide dioxygenase (NOD) reaction that utilizes O(2) and NAD(P)H to convert NO to nitrate, which protects the bacterium from various noxious nitrogen compounds. Therefore, plays a central role in the inducible response to nitrosative stress. The protein is Flavohemoprotein of Salmonella typhi.